The sequence spans 61 residues: Large ribosomal subunit protein bL32 (61 aa).

The span at 1–18 shows a compositional bias: basic residues; the sequence is MAIVPKRKTSKQRKRKRQ. The disordered stretch occupies residues 1-20; sequence MAIVPKRKTSKQRKRKRQTH.

It belongs to the bacterial ribosomal protein bL32 family.

The chain is Large ribosomal subunit protein bL32 (rpmF) from Mycoplasmopsis pulmonis (strain UAB CTIP) (Mycoplasma pulmonis).